The chain runs to 1135 residues: Envelopment polyprotein (1135 aa).

Residues 1–18 (MGIWKWLVMASLVWPVLT) form the signal peptide. At 19-485 (LRNVYDMKIE…VPGFHGWATA (467 aa)) the chain is on the lumenal side. Disulfide bonds link C29/C151, C63/C157, C109/C128, C133/C138, C175/C185, C210/C247, C234/C351, C376/C435, C380/C389, C405/C424, and C452/C475. N134 is a glycosylation site (N-linked (GlcNAc...) asparagine; by host). Residues N235 and N347 are each glycosylated (N-linked (GlcNAc...) asparagine; by host). Residue N399 is glycosylated (N-linked (GlcNAc...) asparagine; by host). A helical transmembrane segment spans residues 486-506 (ALLVTFCFGWVLIPAITFIIL). The Cytoplasmic segment spans residues 507-627 (TILKFIANIF…LNLFRYKSRC (121 aa)). A binding to the ribonucleoprotein region spans residues 516 to 533 (FHTSNQENRLKSVLRKIK). 2 CCHC-type zinc fingers span residues 545–565 (CDVC…GVSC) and 570–591 (CPYC…YKVC). Binding to the ribonucleoprotein regions lie at residues 588–605 (YKVC…KKTV), 592–603 (QVTHRFRDDLKK), and 611–625 (TPGC…RYKS). Positions 611–634 (TPGCYRTLNLFRYKSRCYIFTMWI) constitute an ITAM domain. Residues 615 to 618 (YRTL) carry the YxxL motif. A helical membrane pass occupies residues 628–648 (YIFTMWIFLLVLESILWAASA). Topologically, residues 649–1105 (SETPLTPVWN…EWISGIFSGN (457 aa)) are lumenal. 8 disulfides stabilise this stretch: C735–C770, C739–C777, C751–C885, C765–C896, C780–C904, C806–C815, C823–C832, and C863–C867. The segment at 757–777 (YQYETSWGCNPSDCPGVGTGC) is fusion loop. An N-linked (GlcNAc...) asparagine; by host glycan is attached at N928. Cystine bridges form between C970-C1000, C993-C1045, C1010-C1015, C1046-C1051, and C1085-C1089. The chain crosses the membrane as a helical span at residues 1106–1126 (WIVLIVLCVFLLFSLVLLSIL). The interval 1122–1135 (LLSILCPVRKHKKS) is binding to the ribonucleoprotein. Over 1127 to 1135 (CPVRKHKKS) the chain is Cytoplasmic.

This sequence belongs to the hantavirus envelope glycoprotein family. In terms of assembly, homodimer. Homotetramer; forms heterotetrameric Gn-Gc spikes in the pre-fusion conformation. Interacts (via C-terminus) with the nucleoprotein. Interacts with host TUFM; this interaction contributes to the virus-induced degradation of mitochondria by autophagy, which leads to degradation of host MAVS and inhibition of type I interferon (IFN) responses. Interacts with host MAP1LC3B; this interaction contributes to the virus-induced degradation of mitochondria by autophagy, which leads to degradation of host MAVS and inhibition of type I interferon (IFN) responses. Homodimer. Homotetramer; forms heterotetrameric Gn-Gc spikes in the pre-fusion conformation. Homotrimer; forms homotrimer in the post-fusion conformation at acidic pH. Interacts (via C-terminus) with the nucleoprotein. Post-translationally, envelope polyprotein precursor is quickly cleaved in vivo just after synthesis, presumably by host signal peptidase.

The protein resides in the virion membrane. It localises to the host cell surface. Its subcellular location is the host Golgi apparatus membrane. It is found in the host endoplasmic reticulum membrane. The protein localises to the host mitochondrion. Forms homotetramers with glycoprotein C at the surface of the virion. Attaches the virion to host cell receptors including integrin ITGAV/ITGB3. This attachment induces virion internalization predominantly through clathrin-dependent endocytosis. May also bind to host C1QBP for virus entry into the host cell. Mediates the assembly and budding of infectious virus particles through its interaction with the nucleocapsid protein and the viral genome. May dysregulate normal immune and endothelial cell responses through an ITAM motif. Translocates to mitochondria, binds to host TUFM and recruits MAP1LC3B. These interactions induce mitochondrial autophagy and therefore destruction of host MAVS leading to inhibition of type I interferon (IFN) responses. Concomitant breakdown of glycoprotein N is apparently prevented by the nucleoprotein that may inhibit Gn-stimulated autophagosome-lysosome fusion. Interacts with the viral genomic RNA. Its function is as follows. Forms homotetramers with glycoprotein N at the surface of the virion. Attaches the virion to host cell receptors including integrin ITGAV/ITGB3. This attachment induces virion internalization predominantly through clathrin-dependent endocytosis. May also bind to host C1QBP for virus entry into the host cell. Class II fusion protein that promotes fusion of viral membrane with host endosomal membrane after endocytosis of the virion. In Hantaan virus (strain Lee) (Lee virus), this protein is Envelopment polyprotein (GP).